Consider the following 106-residue polypeptide: Probable insulin-like peptide beta-type 1 (106 aa).

A signal peptide spans 1-19 (MFSFFTYFLLSALLLSASC). Residues 20–51 (RQPSMDTSKADRILREIEMETELENQLSRARR) constitute a propeptide, removed; by convertase egl-3. Disulfide bonds link Cys-60–Cys-89, Cys-72–Cys-102, Cys-76–Cys-103, and Cys-88–Cys-93.

The protein belongs to the insulin family. As to expression, expressed by ASI and ASJ sensory neurons and weakly by ventral cord motor neurons.

It localises to the secreted. Probable insulin-like peptide which negatively regulates synapse development at the neuromuscular junctions. Probably acts as a daf-2/InsR agonist ligand to prevent dauer formation under optimal environmental conditions. This is Probable insulin-like peptide beta-type 1 (ins-4) from Caenorhabditis elegans.